A 356-amino-acid polypeptide reads, in one-letter code: Histidinol-phosphate aminotransferase (356 aa).

Lysine 211 bears the N6-(pyridoxal phosphate)lysine mark.

The protein belongs to the class-II pyridoxal-phosphate-dependent aminotransferase family. Histidinol-phosphate aminotransferase subfamily. Homodimer. Pyridoxal 5'-phosphate serves as cofactor.

It catalyses the reaction L-histidinol phosphate + 2-oxoglutarate = 3-(imidazol-4-yl)-2-oxopropyl phosphate + L-glutamate. It participates in amino-acid biosynthesis; L-histidine biosynthesis; L-histidine from 5-phospho-alpha-D-ribose 1-diphosphate: step 7/9. This Aeromonas hydrophila subsp. hydrophila (strain ATCC 7966 / DSM 30187 / BCRC 13018 / CCUG 14551 / JCM 1027 / KCTC 2358 / NCIMB 9240 / NCTC 8049) protein is Histidinol-phosphate aminotransferase.